The sequence spans 863 residues: MQYPFQEVESFWQKFWEEHKSFQTNIRSSKPKFYCLDMFPYPSGAGLHVGHPEGYTATDILSRFKRMKGFEVLHPMGWDAFGLPAERYAMQTGIHPAITTKDNIDNFRRQIQMIGLSYDWSRELSTTDPDYYKFTQWIFIQLYQSWFNPELKKAESINELIRRFSNQGSNGLDYRQFNSEEWKNFSPVEKEKILSDFRLVYQAEIPVNWCEALGTVLANEEVEEWVGKGYEVVRKPMRQYMMRITAYADRLLEDLELVEWPPSTLEMQKNWIGKSEGLEITFPFLKPLQSGLEGIRIFTTRPDTIFGVTYMVVAPEHPIVSEITTPEQKQKVEEYQKTSSLKSDLDRMELNKEKTGVFTGTFVFNPADPSQKIPVWISDYVLYGYGTGAIMAVPAHDQRDFEFARTFGLKIIPVIEGEISEAAFDSKTSTCINSSSSEISINGLDYTSASSKIISWAESKKIGRKKIQFKLRDWLFARQRYWGEPIPLVHYPSGVTKPIPESELPLVLPNLEEFKPSGTGESPLALAKDWLQYKDPSTGEIGTRETNTMPQWAGSCWYYLRYIDPKNGRFLCDPELEKKWMPVNLYVGGSEHAVLHLLYSRFWHKFLFDIGAVSTKEPFDKLIHQGLILGEDKRKMSKSLGNVVNPDDVIKEYGADSLRLFEMFMGPLEMVKPWSTRGVEGVFRFLNRIWRLFHSGSQESFRLDDVEPTPEELKILHKTIQKVNEDIPNFSFNTAIAQLMIFVNEFTPSDRRPKKVLESFILLLAPFAPHIAEELWKRSGKMESLSYEKFPEADPQYLIESEILIVVQVNGKLRDEFKAPKDVSQSDAISMAKNLDKIKGILEGKTIRKEIYVPGKLVNLVIG.

The 'HIGH' region motif lies at P40 to H51. The short motif at K635–S639 is the 'KMSKS' region element. ATP is bound at residue K638.

This sequence belongs to the class-I aminoacyl-tRNA synthetase family.

The protein localises to the cytoplasm. The catalysed reaction is tRNA(Leu) + L-leucine + ATP = L-leucyl-tRNA(Leu) + AMP + diphosphate. The sequence is that of Leucine--tRNA ligase from Leptospira interrogans serogroup Icterohaemorrhagiae serovar Lai (strain 56601).